Reading from the N-terminus, the 240-residue chain is Ribonuclease P protein component (240 aa).

The disordered stretch occupies residues 1–140; sequence MDEKDLATQQ…KKAGGKGLVS (140 aa). Residues 40-51 are compositionally biased toward pro residues; the sequence is APPPHRVIPPHP. The insert stretch occupies residues 47–123; sequence IPPHPGLRQD…PGPDRDGGSK (77 aa). A compositionally biased stretch (low complexity) spans 122 to 132; that stretch reads SKASRASSPKK.

It belongs to the RnpA family. In terms of assembly, consists of a catalytic RNA component (M1 or rnpB) and a protein subunit.

It carries out the reaction Endonucleolytic cleavage of RNA, removing 5'-extranucleotides from tRNA precursor.. In terms of biological role, RNaseP catalyzes the removal of the 5'-leader sequence from pre-tRNA to produce the mature 5'-terminus. It can also cleave other RNA substrates such as 4.5S RNA. The protein component plays an auxiliary but essential role in vivo by binding to the 5'-leader sequence and broadening the substrate specificity of the ribozyme. In Thermus filiformis, this protein is Ribonuclease P protein component.